A 124-amino-acid polypeptide reads, in one-letter code: Cytochrome b5-like protein (124 aa).

The chain crosses the membrane as a helical span at residues 5-22 (YLLILIIIYVIKIICRYF). Residues 49–124 (NQINQVNQVN…ILSKYKITEK (76 aa)) enclose the Cytochrome b5 heme-binding domain. Residues H84 and H108 each coordinate heme.

This sequence belongs to the cytochrome b5 family.

Its subcellular location is the membrane. In terms of biological role, membrane bound hemoprotein which function as an electron carrier for several membrane bound oxygenases. The chain is Cytochrome b5-like protein from Acanthamoeba polyphaga (Amoeba).